A 325-amino-acid polypeptide reads, in one-letter code: Protein translocase subunit SecF (325 aa).

Transmembrane regions (helical) follow at residues 36–56 (GYIL…TKGF), 148–168 (LAQG…IYVG), 175–197 (LGFG…FSAL), 202–224 (DLTF…IVVF), 254–274 (TIIT…FGGP), and 281–301 (LALL…AIAI).

It belongs to the SecD/SecF family. SecF subfamily. As to quaternary structure, forms a complex with SecD. Part of the essential Sec protein translocation apparatus which comprises SecA, SecYEG and auxiliary proteins SecDF-YajC and YidC.

It is found in the cell inner membrane. Part of the Sec protein translocase complex. Interacts with the SecYEG preprotein conducting channel. SecDF uses the proton motive force (PMF) to complete protein translocation after the ATP-dependent function of SecA. This chain is Protein translocase subunit SecF, found in Haemophilus influenzae (strain ATCC 51907 / DSM 11121 / KW20 / Rd).